The following is a 216-amino-acid chain: Large ribosomal subunit protein uL3 (216 aa).

The segment at 137–158 (GASHGAHKNHRKPGSIGGASTP) is disordered.

It belongs to the universal ribosomal protein uL3 family. As to quaternary structure, part of the 50S ribosomal subunit. Forms a cluster with proteins L14 and L19.

One of the primary rRNA binding proteins, it binds directly near the 3'-end of the 23S rRNA, where it nucleates assembly of the 50S subunit. The chain is Large ribosomal subunit protein uL3 from Pseudarthrobacter chlorophenolicus (strain ATCC 700700 / DSM 12829 / CIP 107037 / JCM 12360 / KCTC 9906 / NCIMB 13794 / A6) (Arthrobacter chlorophenolicus).